A 702-amino-acid polypeptide reads, in one-letter code: Archaeal Lon protease (702 aa).

The interval 1-63 (MSNESTNDAP…VGVEGDVSID (63 aa)) is disordered. At 1–183 (MSNESTNDAP…EARKRNQMRS (183 aa)) the chain is on the cytoplasmic side. A compositionally biased stretch (acidic residues) spans 10–48 (PPDDDPDDPEPSVDHDDTDGLQDDPADSVDDAGEVDDLE). 117-124 (GSPGTGKS) serves as a coordination point for ATP. The helical transmembrane segment at 184 to 201 (FLMWIMILLAVGYALLIA) threads the bilayer. Over 202–206 (TPARP) the chain is Extracellular. The chain crosses the membrane as a helical span at residues 207 to 223 (LLALLSAAGIYLLFRYT). Residues 224 to 702 (NRGSDAMVPK…GTTGGNPSPQ (479 aa)) are Cytoplasmic-facing. The 181-residue stretch at 487 to 667 (EEAVGRVNGL…SEVLDVALVG (181 aa)) folds into the Lon proteolytic domain. Active-site residues include Ser-574 and Lys-617.

It belongs to the peptidase S16 family. Archaeal LonB subfamily. Homohexamer. Organized in a ring with a central cavity.

The protein localises to the cell membrane. In terms of biological role, ATP-dependent serine protease that mediates the selective degradation of mutant and abnormal proteins as well as certain short-lived regulatory proteins. Degrades polypeptides processively. In Halobacterium salinarum (strain ATCC 700922 / JCM 11081 / NRC-1) (Halobacterium halobium), this protein is Archaeal Lon protease.